The primary structure comprises 204 residues: Protein GrpE (204 aa).

Positions 1–12 (MSNQEKKMHEEE) are enriched in basic and acidic residues. The segment at 1-37 (MSNQEKKMHEEELQQQETVEADTEAEAEAVGTDADIE) is disordered.

The protein belongs to the GrpE family. As to quaternary structure, homodimer.

It localises to the cytoplasm. Functionally, participates actively in the response to hyperosmotic and heat shock by preventing the aggregation of stress-denatured proteins, in association with DnaK and GrpE. It is the nucleotide exchange factor for DnaK and may function as a thermosensor. Unfolded proteins bind initially to DnaJ; upon interaction with the DnaJ-bound protein, DnaK hydrolyzes its bound ATP, resulting in the formation of a stable complex. GrpE releases ADP from DnaK; ATP binding to DnaK triggers the release of the substrate protein, thus completing the reaction cycle. Several rounds of ATP-dependent interactions between DnaJ, DnaK and GrpE are required for fully efficient folding. This is Protein GrpE from Vibrio proteolyticus (Aeromonas proteolytica).